Here is a 500-residue protein sequence, read N- to C-terminus: Protein psiE (500 aa).

A signal peptide spans 1 to 18 (MKLISVLITFLLATVIYS). An N-linked (GlcNAc...) asparagine glycan is attached at Asn-59. The PA14 domain occupies 114 to 256 (TYDTTRKIYV…KDYCGVCQGD (143 aa)). N-linked (GlcNAc...) asparagine glycosylation is found at Asn-314, Asn-341, Asn-366, Asn-420, and Asn-469.

It belongs to the prespore-cell-inducing factor family.

The protein localises to the secreted. This is Protein psiE (psiE) from Dictyostelium discoideum (Social amoeba).